The chain runs to 117 residues: UPF0342 protein lmo2223 (117 aa).

It belongs to the UPF0342 family.

This chain is UPF0342 protein lmo2223, found in Listeria monocytogenes serovar 1/2a (strain ATCC BAA-679 / EGD-e).